A 122-amino-acid chain; its full sequence is UPF0102 protein CTC_01256 (122 aa).

The protein belongs to the UPF0102 family.

This Clostridium tetani (strain Massachusetts / E88) protein is UPF0102 protein CTC_01256.